The chain runs to 213 residues: Large ribosomal subunit protein uL3 (213 aa).

The segment at 135 to 155 (THGSKNHRLPGSTGAGTTPGR) is disordered.

The protein belongs to the universal ribosomal protein uL3 family. Part of the 50S ribosomal subunit. Forms a cluster with proteins L14 and L19.

In terms of biological role, one of the primary rRNA binding proteins, it binds directly near the 3'-end of the 23S rRNA, where it nucleates assembly of the 50S subunit. This chain is Large ribosomal subunit protein uL3, found in Synechocystis sp. (strain ATCC 27184 / PCC 6803 / Kazusa).